An 874-amino-acid polypeptide reads, in one-letter code: Alanine--tRNA ligase (874 aa).

Zn(2+)-binding residues include histidine 562, histidine 566, cysteine 663, and histidine 667.

It belongs to the class-II aminoacyl-tRNA synthetase family. Zn(2+) is required as a cofactor.

Its subcellular location is the cytoplasm. It catalyses the reaction tRNA(Ala) + L-alanine + ATP = L-alanyl-tRNA(Ala) + AMP + diphosphate. Functionally, catalyzes the attachment of alanine to tRNA(Ala) in a two-step reaction: alanine is first activated by ATP to form Ala-AMP and then transferred to the acceptor end of tRNA(Ala). Also edits incorrectly charged Ser-tRNA(Ala) and Gly-tRNA(Ala) via its editing domain. This Bordetella pertussis (strain Tohama I / ATCC BAA-589 / NCTC 13251) protein is Alanine--tRNA ligase.